The sequence spans 513 residues: Acyltransferase uat1 (513 aa).

Catalysis depends on His-158, which acts as the Proton acceptor.

It belongs to the plant acyltransferase family.

The protein operates within secondary metabolite biosynthesis. Its function is as follows. Acyltransferase; part of the gene cluster that mediates the biosynthesis of the glycolipid biosurfactant ustilagic acid (UA). UA is a secreted cellobiose glycolipid that is toxic for many microorganisms and confers biocontrol activity to U.maydis. UA consists of 15,16-dihydroxypalmitic or 2,15,16-trihydroxypalmitic acid, which is O-glycosidically linked to cellobiose at its terminal hydroxyl group. In addition, the cellobiose moiety is acetylated and acylated with a short-chain hydroxy fatty acid. UA biosynthesis starts with omega-hydroxylation of palmitic acid catalyzed by the cytochrome P450 monooxygenase cyp1. Terminal hydroxylation of palmitic acid precedes subterminal hydroxylation catalyzed by the cytochrome P450 monooxygenase cyp2. Sequential glucosylation of the hydroxy fatty acid is probably catalyzed by the glycosyltransferase ugt1. The cellobiose lipid is further decorated by acetylation of the proximal glucose residue and by acylation with a short-chain beta-hydroxy fatty acid at the distal glucose residue. The acyltransferase uat1 may be a good candidate for catalyzing either acetylation or acylation of the cellobiose lipid. The fatty acid synthase fas2 may be involved in synthesis of the carbon backbone of the short-chain beta-hydroxy fatty acid esterified to the cellobiose disaccharide. The secreted UA consists of a mixture of both alpha-hydroxylated and non-hydroxylated glycolipids; therefore, alpha-hydroxylation of the long-chain fatty, catalyzed by the fatty acid hydroxylase ahd1, occurs late in UA biosynthesis and may be the last step before secretion. The polypeptide is Acyltransferase uat1 (Mycosarcoma maydis (Corn smut fungus)).